The chain runs to 462 residues: Ammonium transporter Rh type B (462 aa).

Residues M1–K11 lie on the Cytoplasmic side of the membrane. Residues L12 to Q32 traverse the membrane as a helical segment. The Extracellular portion of the chain corresponds to Y33–Y62. N46 carries N-linked (GlcNAc...) asparagine glycosylation. The chain crosses the membrane as a helical span at residues P63–L83. The Cytoplasmic portion of the chain corresponds to Q84 to N94. Residues F95–L115 form a helical membrane-spanning segment. Residues H116–E125 lie on the Extracellular side of the membrane. The chain crosses the membrane as a helical span at residues S126 to G146. Topologically, residues K147 to Q152 are cytoplasmic. The chain crosses the membrane as a helical span at residues L153–T173. Residues L174–A180 lie on the Extracellular side of the membrane. A helical membrane pass occupies residues G181–L201. Over Y202–D220 the chain is Cytoplasmic. Residues L221–V241 form a helical membrane-spanning segment. At T242–M302 the chain is on the extracellular side. Residues L303–F323 traverse the membrane as a helical segment. The Cytoplasmic segment spans residues K324–N344. The chain crosses the membrane as a helical span at residues L345–S365. Residues K366–A395 are Extracellular-facing. The chain crosses the membrane as a helical span at residues I396–L416. Residues K417–S462 lie on the Cytoplasmic side of the membrane. The interval E441–S462 is disordered. The segment covering K453–S462 has biased composition (basic and acidic residues).

The protein belongs to the ammonium transporter (TC 2.A.49) family. Rh subfamily.

The protein resides in the basolateral cell membrane. The protein localises to the cytoplasmic vesicle membrane. Functionally, functions as an ammonia transporter. May play a role in the elimination of ammonia in the gill. In Oryzias latipes (Japanese rice fish), this protein is Ammonium transporter Rh type B (rhbg).